The following is a 204-amino-acid chain: Imidazole glycerol phosphate synthase subunit HisH 1 (204 aa).

Residues 5-204 (KVVIIDTGCA…AKLIQNFLEL (200 aa)) enclose the Glutamine amidotransferase type-1 domain. The Nucleophile role is filled by Cys-80. Catalysis depends on residues His-186 and Glu-188.

As to quaternary structure, heterodimer of HisH and HisF.

The protein localises to the cytoplasm. The enzyme catalyses 5-[(5-phospho-1-deoxy-D-ribulos-1-ylimino)methylamino]-1-(5-phospho-beta-D-ribosyl)imidazole-4-carboxamide + L-glutamine = D-erythro-1-(imidazol-4-yl)glycerol 3-phosphate + 5-amino-1-(5-phospho-beta-D-ribosyl)imidazole-4-carboxamide + L-glutamate + H(+). It catalyses the reaction L-glutamine + H2O = L-glutamate + NH4(+). It participates in amino-acid biosynthesis; L-histidine biosynthesis; L-histidine from 5-phospho-alpha-D-ribose 1-diphosphate: step 5/9. IGPS catalyzes the conversion of PRFAR and glutamine to IGP, AICAR and glutamate. The HisH subunit provides the glutamine amidotransferase activity that produces the ammonia necessary to HisF for the synthesis of IGP and AICAR. The protein is Imidazole glycerol phosphate synthase subunit HisH 1 (hisH1) of Vibrio vulnificus (strain YJ016).